We begin with the raw amino-acid sequence, 984 residues long: Hyaluronate lyase (984 aa).

Polar residues-rich tracts occupy residues 1 to 12, 19 to 32, and 54 to 66; these read MKQVVDNQTQNK, DFNQ…SWSH, and IQRT…SLSS. 2 disordered regions span residues 1-32 and 49-68; these read MKQV…SWSH and DKSP…SSDK. An N-terminal signal peptide occupies residues 1 to 40; it reads MKQVVDNQTQNKELVKNGDFNQTNPVSGSWSHTSAREWSA. Residues Asn-429, His-479, and Tyr-488 contribute to the active site. Residues 701 to 726 are compositionally biased toward basic and acidic residues; it reads TEKDAKREDTTKEFMSKHSKDAKEKT. The segment at 701–728 is disordered; the sequence is TEKDAKREDTTKEFMSKHSKDAKEKTGQ.

This sequence belongs to the polysaccharide lyase 8 family.

The protein localises to the secreted. The catalysed reaction is [hyaluronan](n) = n 3-(4-deoxy-beta-D-gluc-4-enuronosyl)-N-acetyl-D-glucosamine + H2O. The polypeptide is Hyaluronate lyase (Streptococcus agalactiae serotype III (strain NEM316)).